Reading from the N-terminus, the 36-residue chain is Photosystem I reaction center subunit VIII (36 aa).

The helical transmembrane segment at 6–28 threads the bilayer; the sequence is LPSIFVPLIGLFFPAIAMASLFL.

Belongs to the PsaI family.

It localises to the plastid. The protein localises to the chloroplast thylakoid membrane. May help in the organization of the PsaL subunit. This chain is Photosystem I reaction center subunit VIII, found in Amborella trichopoda.